The sequence spans 180 residues: Shikimate kinase (180 aa).

An ATP-binding site is contributed by 19–24 (GAGKTT). Thr-23 is a Mg(2+) binding site. Residues Asp-41, Arg-65, and Gly-87 each contribute to the substrate site. Arg-125 provides a ligand contact to ATP. Arg-144 contacts substrate.

This sequence belongs to the shikimate kinase family. In terms of assembly, monomer. Mg(2+) is required as a cofactor.

The protein resides in the cytoplasm. The catalysed reaction is shikimate + ATP = 3-phosphoshikimate + ADP + H(+). It participates in metabolic intermediate biosynthesis; chorismate biosynthesis; chorismate from D-erythrose 4-phosphate and phosphoenolpyruvate: step 5/7. Functionally, catalyzes the specific phosphorylation of the 3-hydroxyl group of shikimic acid using ATP as a cosubstrate. The protein is Shikimate kinase of Acinetobacter baumannii (strain SDF).